Here is a 156-residue protein sequence, read N- to C-terminus: Putative pre-16S rRNA nuclease (156 aa).

Belongs to the YqgF nuclease family.

It is found in the cytoplasm. In terms of biological role, could be a nuclease involved in processing of the 5'-end of pre-16S rRNA. The sequence is that of Putative pre-16S rRNA nuclease from Bartonella tribocorum (strain CIP 105476 / IBS 506).